Consider the following 433-residue polypeptide: Inward rectifier potassium channel 18 (433 aa).

Over 1-77 the chain is Cytoplasmic; that stretch reads MTAASRANPY…LADMFTTCVD (77 aa). The chain crosses the membrane as a helical span at residues 78 to 104; that stretch reads IRWRYMLLIFSLAFLASWLLFGVIFWV. Over 105–129 the chain is Extracellular; it reads IAVAHGDLEPAEGHGRTPCVMQVHG. The segment at residues 130–146 is an intramembrane region (helical; Pore-forming); that stretch reads FMAAFLFSIETQTTIGY. A Selectivity filter motif is present at residues 143-148; the sequence is TIGYGL. Over 147–155 the chain is Extracellular; sequence GLRCVTEEC. A helical transmembrane segment spans residues 156–183; sequence LVAVFMVVAQSIVGCIIDSFMIGAIMAK. At 184–433 the chain is on the cytoplasmic side; sequence MARPKKRAQT…QRPYRRGSEI (250 aa). Positions 387–433 are disordered; it reads DEEDEADGDQDGRSRDGLSPQARHDFDRLQAGGGVLEQRPYRRGSEI. Residues 396–414 show a composition bias toward basic and acidic residues; that stretch reads QDGRSRDGLSPQARHDFDR.

Belongs to the inward rectifier-type potassium channel (TC 1.A.2.1) family. KCNJ12 subfamily. Can form heteromeric channels with Kir2.1/KCNJ2. Can form heteromeric channels with Kir2.2/KCNJ12. In terms of processing, probably phosphorylated by PKC; decreases single-channel open probability. As to expression, specifically expressed in skeletal muscle.

It is found in the cell membrane. It localises to the endoplasmic reticulum. It carries out the reaction K(+)(in) = K(+)(out). Its function is as follows. Inward rectifier potassium channels are characterized by a greater tendency to allow potassium to flow into the cell rather than out of it. Their voltage dependence is regulated by the concentration of extracellular potassium; as external potassium is raised, the voltage range of the channel opening shifts to more positive voltages. The inward rectification is mainly due to the blockage of outward current by internal magnesium. The sequence is that of Inward rectifier potassium channel 18 (KCNJ18) from Homo sapiens (Human).